The sequence spans 369 residues: sn-glycerol-3-phosphate import ATP-binding protein UgpC (369 aa).

The 232-residue stretch at 4–235 (LSLRNVQKTY…PASTFVAGFI (232 aa)) folds into the ABC transporter domain. Residue 37–44 (GPSGCGKS) coordinates ATP.

Belongs to the ABC transporter superfamily. sn-glycerol-3-phosphate importer (TC 3.A.1.1.3) family. As to quaternary structure, the complex is composed of two ATP-binding proteins (UgpC), two transmembrane proteins (UgpA and UgpE) and a solute-binding protein (UgpB).

The protein localises to the cell inner membrane. The catalysed reaction is sn-glycerol 3-phosphate(out) + ATP + H2O = sn-glycerol 3-phosphate(in) + ADP + phosphate + H(+). Functionally, part of the ABC transporter complex UgpBAEC involved in sn-glycerol-3-phosphate (G3P) import. Responsible for energy coupling to the transport system. This chain is sn-glycerol-3-phosphate import ATP-binding protein UgpC, found in Cupriavidus pinatubonensis (strain JMP 134 / LMG 1197) (Cupriavidus necator (strain JMP 134)).